Here is a 294-residue protein sequence, read N- to C-terminus: Nucleotide-binding protein Adeh_0147 (294 aa).

17–24 (GVSGSGKS) contacts ATP. GTP is bound at residue 68–71 (DARE).

The protein belongs to the RapZ-like family.

Functionally, displays ATPase and GTPase activities. The sequence is that of Nucleotide-binding protein Adeh_0147 from Anaeromyxobacter dehalogenans (strain 2CP-C).